Reading from the N-terminus, the 165-residue chain is Phosphopantetheine adenylyltransferase (165 aa).

Residue T9 participates in substrate binding. ATP-binding positions include 9-10 (TF) and H17. K41, L78, and R92 together coordinate substrate. ATP-binding positions include 93-95 (GLR), E103, and 128-134 (RQAIASK).

It belongs to the bacterial CoaD family. As to quaternary structure, homohexamer. Mg(2+) is required as a cofactor.

Its subcellular location is the cytoplasm. It carries out the reaction (R)-4'-phosphopantetheine + ATP + H(+) = 3'-dephospho-CoA + diphosphate. It participates in cofactor biosynthesis; coenzyme A biosynthesis; CoA from (R)-pantothenate: step 4/5. Its function is as follows. Reversibly transfers an adenylyl group from ATP to 4'-phosphopantetheine, yielding dephospho-CoA (dPCoA) and pyrophosphate. The protein is Phosphopantetheine adenylyltransferase of Ruegeria pomeroyi (strain ATCC 700808 / DSM 15171 / DSS-3) (Silicibacter pomeroyi).